Here is a 225-residue protein sequence, read N- to C-terminus: NAD(P)H-quinone oxidoreductase subunit K, chloroplastic (225 aa).

[4Fe-4S] cluster-binding residues include Cys-43, Cys-44, Cys-108, and Cys-139.

It belongs to the complex I 20 kDa subunit family. As to quaternary structure, NDH is composed of at least 16 different subunits, 5 of which are encoded in the nucleus. Requires [4Fe-4S] cluster as cofactor.

The protein localises to the plastid. The protein resides in the chloroplast thylakoid membrane. The catalysed reaction is a plastoquinone + NADH + (n+1) H(+)(in) = a plastoquinol + NAD(+) + n H(+)(out). It catalyses the reaction a plastoquinone + NADPH + (n+1) H(+)(in) = a plastoquinol + NADP(+) + n H(+)(out). Its function is as follows. NDH shuttles electrons from NAD(P)H:plastoquinone, via FMN and iron-sulfur (Fe-S) centers, to quinones in the photosynthetic chain and possibly in a chloroplast respiratory chain. The immediate electron acceptor for the enzyme in this species is believed to be plastoquinone. Couples the redox reaction to proton translocation, and thus conserves the redox energy in a proton gradient. The sequence is that of NAD(P)H-quinone oxidoreductase subunit K, chloroplastic from Draba nemorosa (Woodland whitlowgrass).